A 213-amino-acid polypeptide reads, in one-letter code: Uracil phosphoribosyltransferase (213 aa).

Residues R78, R103, and 131-139 (DPMLATGGT) contribute to the 5-phospho-alpha-D-ribose 1-diphosphate site. Uracil-binding positions include I197 and 202–204 (GDA). A 5-phospho-alpha-D-ribose 1-diphosphate-binding site is contributed by D203.

It belongs to the UPRTase family. Mg(2+) serves as cofactor.

The enzyme catalyses UMP + diphosphate = 5-phospho-alpha-D-ribose 1-diphosphate + uracil. Its pathway is pyrimidine metabolism; UMP biosynthesis via salvage pathway; UMP from uracil: step 1/1. Its activity is regulated as follows. Allosterically activated by GTP. Its function is as follows. Catalyzes the conversion of uracil and 5-phospho-alpha-D-ribose 1-diphosphate (PRPP) to UMP and diphosphate. The sequence is that of Uracil phosphoribosyltransferase from Bifidobacterium longum subsp. infantis (strain ATCC 15697 / DSM 20088 / JCM 1222 / NCTC 11817 / S12).